A 439-amino-acid chain; its full sequence is Tol-Pal system protein TolB (439 aa).

The signal sequence occupies residues 1–22 (MTKFPRWLAMLVGLLFPLSALT).

The protein belongs to the TolB family. In terms of assembly, the Tol-Pal system is composed of five core proteins: the inner membrane proteins TolA, TolQ and TolR, the periplasmic protein TolB and the outer membrane protein Pal. They form a network linking the inner and outer membranes and the peptidoglycan layer.

It localises to the periplasm. Part of the Tol-Pal system, which plays a role in outer membrane invagination during cell division and is important for maintaining outer membrane integrity. This is Tol-Pal system protein TolB from Xylella fastidiosa (strain 9a5c).